The chain runs to 109 residues: RNA-binding protein Hfq (109 aa).

The 60-residue stretch at 9-68 folds into the Sm domain; the sequence is DPFLNALRKEKVSVSVYLVNGIKLQGQVEAFDQFCIVLRNTVNQMVYKHAISTIVPAKSV.

Belongs to the Hfq family. In terms of assembly, homohexamer.

Functionally, RNA chaperone that binds small regulatory RNA (sRNAs) and mRNAs to facilitate mRNA translational regulation in response to envelope stress, environmental stress and changes in metabolite concentrations. Also binds with high specificity to tRNAs. The protein is RNA-binding protein Hfq of Francisella philomiragia subsp. philomiragia (strain ATCC 25017 / CCUG 19701 / FSC 153 / O#319-036).